The sequence spans 207 residues: Segregation and condensation protein B (207 aa).

This sequence belongs to the ScpB family. As to quaternary structure, homodimer. Homodimerization may be required to stabilize the binding of ScpA to the Smc head domains. Component of a cohesin-like complex composed of ScpA, ScpB and the Smc homodimer, in which ScpA and ScpB bind to the head domain of Smc. The presence of the three proteins is required for the association of the complex with DNA.

It localises to the cytoplasm. In terms of biological role, participates in chromosomal partition during cell division. May act via the formation of a condensin-like complex containing Smc and ScpA that pull DNA away from mid-cell into both cell halves. The polypeptide is Segregation and condensation protein B (Mycoplasma genitalium (strain ATCC 33530 / DSM 19775 / NCTC 10195 / G37) (Mycoplasmoides genitalium)).